We begin with the raw amino-acid sequence, 245 residues long: Adenosylcobinamide-GDP ribazoletransferase (245 aa).

The next 5 helical transmembrane spans lie at 31–51 (FGRA…VLYG), 61–81 (PLLQ…ALHL), 113–133 (AAVV…AALL), 138–158 (PGLL…LFLT), and 192–212 (LAFG…FAWL).

The protein belongs to the CobS family. Mg(2+) serves as cofactor.

It localises to the cell inner membrane. The catalysed reaction is alpha-ribazole + adenosylcob(III)inamide-GDP = adenosylcob(III)alamin + GMP + H(+). The enzyme catalyses alpha-ribazole 5'-phosphate + adenosylcob(III)inamide-GDP = adenosylcob(III)alamin 5'-phosphate + GMP + H(+). It participates in cofactor biosynthesis; adenosylcobalamin biosynthesis; adenosylcobalamin from cob(II)yrinate a,c-diamide: step 7/7. In terms of biological role, joins adenosylcobinamide-GDP and alpha-ribazole to generate adenosylcobalamin (Ado-cobalamin). Also synthesizes adenosylcobalamin 5'-phosphate from adenosylcobinamide-GDP and alpha-ribazole 5'-phosphate. This is Adenosylcobinamide-GDP ribazoletransferase from Pseudomonas paraeruginosa (strain DSM 24068 / PA7) (Pseudomonas aeruginosa (strain PA7)).